We begin with the raw amino-acid sequence, 357 residues long: Arginine kinase (357 aa).

One can recognise a Phosphagen kinase N-terminal domain in the interval 9-91; that stretch reads KLEAGFKKLQ…FNPIIEDYHE (83 aa). 64 to 66 provides a ligand contact to L-arginine; it reads GVG. The 238-residue stretch at 119-356 folds into the Phosphagen kinase C-terminal domain; that stretch reads YVVSTHVRCG…LEMIKMEEAA (238 aa). ATP-binding positions include 122-126 and His185; that span reads STHVR. L-arginine is bound at residue Glu225. Arg229 serves as a coordination point for ATP. Cys271 serves as a coordination point for L-arginine. ATP is bound by residues 280 to 284 and 309 to 314; these read RASVH and RGTRGE.

Belongs to the ATP:guanido phosphotransferase family.

The enzyme catalyses L-arginine + ATP = N(omega)-phospho-L-arginine + ADP + H(+). In terms of biological role, catalyzes the reversible transfer of high energy ATP gamma-phosphate group to L-arginine. This Polybetes pythagoricus (South American huntsman spider) protein is Arginine kinase.